Consider the following 231-residue polypeptide: MSLPVVRLVWLGRVHYSELLALQEHWLRRLQADPRPGTLSGTKAGVLLVCEPAGPVYTGGLRGGLTPEETTRLRALGAEVRATGRGGLATFHGPGQLLCHPVLDLRLLGLRLRTHVAALEACAVRLCELRGLQGARARPPPYTGVWLGERKICAIGVRCGRHITSHGLALNCSTDLTWFEHIVPCGLVGTGVTSLSEALQRLVTVDEVMPSFLVAFKETFKCTLISEDSPS.

The BPL/LPL catalytic domain occupies 41 to 224 (GTKAGVLLVC…AFKETFKCTL (184 aa)). Lys43 carries the N6-succinyllysine modification. Residues 85-92 (RGGLATFH), 154-156 (AIG), and 167-169 (GLA) each bind substrate. Cys185 serves as the catalytic Acyl-thioester intermediate.

This sequence belongs to the LipB family.

The protein localises to the mitochondrion. It catalyses the reaction octanoyl-[ACP] + L-lysyl-[protein] = N(6)-octanoyl-L-lysyl-[protein] + holo-[ACP] + H(+). It functions in the pathway protein modification; protein lipoylation via endogenous pathway; protein N(6)-(lipoyl)lysine from octanoyl-[acyl-carrier-protein]: step 1/2. Catalyzes the transfer of endogenously produced octanoic acid from octanoyl-acyl-carrier-protein onto the lipoyl domains of lipoate-dependent enzymes such as the protein H of the glycine cleavage system (GCSH). Lipoyl-ACP can also act as a substrate although octanoyl-ACP is likely to be the physiological substrate. This is Octanoyl-[acyl-carrier-protein]:protein N-octanoyltransferase LIPT2, mitochondrial from Mus musculus (Mouse).